A 255-amino-acid chain; its full sequence is Phosphate import ATP-binding protein PstB (255 aa).

In terms of domain architecture, ABC transporter spans 8–250; it reads IKSSNLNVHY…PGNKMTQDYI (243 aa). 40 to 47 lines the ATP pocket; sequence GPSGCGKS.

This sequence belongs to the ABC transporter superfamily. Phosphate importer (TC 3.A.1.7) family. The complex is composed of two ATP-binding proteins (PstB), two transmembrane proteins (PstC and PstA) and a solute-binding protein (PstS).

It localises to the cell inner membrane. The catalysed reaction is phosphate(out) + ATP + H2O = ADP + 2 phosphate(in) + H(+). Its function is as follows. Part of the ABC transporter complex PstSACB involved in phosphate import. Responsible for energy coupling to the transport system. This chain is Phosphate import ATP-binding protein PstB, found in Pelagibacter ubique (strain HTCC1062).